Consider the following 394-residue polypeptide: Phosphoglycerate kinase (394 aa).

Substrate-binding positions include 21 to 23 (DFN), arginine 36, 59 to 62 (HLGR), arginine 118, and arginine 151. ATP is bound by residues lysine 202, glycine 293, glutamate 324, and 350–353 (GGDS).

This sequence belongs to the phosphoglycerate kinase family. Monomer.

It is found in the cytoplasm. The enzyme catalyses (2R)-3-phosphoglycerate + ATP = (2R)-3-phospho-glyceroyl phosphate + ADP. The protein operates within carbohydrate degradation; glycolysis; pyruvate from D-glyceraldehyde 3-phosphate: step 2/5. The protein is Phosphoglycerate kinase of Exiguobacterium sp. (strain ATCC BAA-1283 / AT1b).